The chain runs to 309 residues: Aspartate carbamoyltransferase catalytic subunit (309 aa).

Arg-58 and Thr-59 together coordinate carbamoyl phosphate. L-aspartate is bound at residue Lys-86. Residues Arg-108, His-136, and Gln-139 each contribute to the carbamoyl phosphate site. Arg-169 and Arg-223 together coordinate L-aspartate. Residues Gly-264 and Pro-265 each contribute to the carbamoyl phosphate site.

Belongs to the aspartate/ornithine carbamoyltransferase superfamily. ATCase family. Heterododecamer (2C3:3R2) of six catalytic PyrB chains organized as two trimers (C3), and six regulatory PyrI chains organized as three dimers (R2).

It carries out the reaction carbamoyl phosphate + L-aspartate = N-carbamoyl-L-aspartate + phosphate + H(+). It participates in pyrimidine metabolism; UMP biosynthesis via de novo pathway; (S)-dihydroorotate from bicarbonate: step 2/3. In terms of biological role, catalyzes the condensation of carbamoyl phosphate and aspartate to form carbamoyl aspartate and inorganic phosphate, the committed step in the de novo pyrimidine nucleotide biosynthesis pathway. The protein is Aspartate carbamoyltransferase catalytic subunit of Pelotomaculum thermopropionicum (strain DSM 13744 / JCM 10971 / SI).